The primary structure comprises 328 residues: Probable tRNA pseudouridine synthase B (328 aa).

Residue Asp71 is the Nucleophile of the active site. Residues 238–313 (LPKIWVRDSA…LVARVDRVIM (76 aa)) form the PUA domain.

Belongs to the pseudouridine synthase TruB family. Type 2 subfamily.

The catalysed reaction is uridine(55) in tRNA = pseudouridine(55) in tRNA. Functionally, could be responsible for synthesis of pseudouridine from uracil-55 in the psi GC loop of transfer RNAs. The polypeptide is Probable tRNA pseudouridine synthase B (Pyrobaculum islandicum (strain DSM 4184 / JCM 9189 / GEO3)).